A 227-amino-acid polypeptide reads, in one-letter code: Acyl-protein thioesterase 1 (227 aa).

Active-site charge relay system residues include S119, D173, and H207.

This sequence belongs to the AB hydrolase superfamily. AB hydrolase 2 family.

The protein localises to the cytoplasm. Its subcellular location is the nucleus. The catalysed reaction is S-hexadecanoyl-L-cysteinyl-[protein] + H2O = L-cysteinyl-[protein] + hexadecanoate + H(+). Hydrolyzes fatty acids from S-acylated cysteine residues in proteins with a strong preference for palmitoylated G-alpha proteins over other acyl substrates. Mediates the deacylation of G-alpha proteins such as GPA1 in vivo, but has weak or no activity toward palmitoylated Ras proteins. Has weak lysophospholipase activity in vitro; however such activity may not exist in vivo. This Yarrowia lipolytica (strain CLIB 122 / E 150) (Yeast) protein is Acyl-protein thioesterase 1.